The following is a 66-amino-acid chain: Putative transmembrane protein ORF66 (66 aa).

The Cytoplasmic segment spans residues 1-6 (MSDVDD). Residues 7 to 27 (TIVDSIAIVGAILIGIFLIVV) traverse the membrane as a helical segment. Residues 28–39 (SVSNTSLFNNTE) lie on the Extracellular side of the membrane. A helical membrane pass occupies residues 40-60 (YDSMINSVLVIISSVIAYTLG). The Cytoplasmic portion of the chain corresponds to 61-66 (KRRSKS).

The protein localises to the host membrane. The chain is Putative transmembrane protein ORF66 from Acidianus filamentous virus 2 (isolate Italy/Pozzuoli) (AFV-2).